The sequence spans 406 residues: COP9 signalosome complex subunit 4 (406 aa).

N-acetylalanine is present on A2. The residue at position 25 (K25) is an N6-acetyllysine. Residues 197-366 (YRRKFIEAAQ…GIVHFETREA (170 aa)) form the PCI domain.

The protein belongs to the CSN4 family. Component of the CSN complex, composed of COPS1/GPS1, COPS2, COPS3, COPS4, COPS5, COPS6, COPS7 (COPS7A or COPS7B), COPS8 and COPS9. In the complex, it probably interacts directly with COPS1, COPS2, COPS3, COPS5, COPS6, COPS7 (COPS7A or COPS7B) and COPS8. Interacts with TOR1A; the interaction is direct and associates TOR1A and SNAPIN with the CSN complex. Interacts with STON2; controls STON2 neddylation levels. Interacts with ERCC6.

Its subcellular location is the cytoplasm. The protein localises to the nucleus. It is found in the cytoplasmic vesicle. It localises to the secretory vesicle. The protein resides in the synaptic vesicle. In terms of biological role, component of the COP9 signalosome complex (CSN), a complex involved in various cellular and developmental processes. The CSN complex is an essential regulator of the ubiquitin (Ubl) conjugation pathway by mediating the deneddylation of the cullin subunits of SCF-type E3 ligase complexes, leading to decrease the Ubl ligase activity of SCF-type complexes such as SCF, CSA or DDB2. Also involved in the deneddylation of non-cullin subunits such as STON2. The complex is also involved in phosphorylation of p53/TP53, c-jun/JUN, IkappaBalpha/NFKBIA, ITPK1, IRF8/ICSBP and SNAPIN, possibly via its association with CK2 and PKD kinases. CSN-dependent phosphorylation of TP53 and JUN promotes and protects degradation by the Ubl system, respectively. The chain is COP9 signalosome complex subunit 4 (COPS4) from Bos taurus (Bovine).